The chain runs to 447 residues: Tubulin beta-1 chain (447 aa).

Residues Gln-11, Glu-69, Ser-138, Gly-142, Thr-143, Gly-144, Asn-204, and Asn-226 each coordinate GTP. Glu-69 provides a ligand contact to Mg(2+). The segment covering 411–427 (AESNMNDLVSEYQQYQD) has biased composition (polar residues). The tract at residues 411–447 (AESNMNDLVSEYQQYQDATADEEGDYEDEEEQVPEDE) is disordered. Acidic residues predominate over residues 429 to 447 (TADEEGDYEDEEEQVPEDE).

The protein belongs to the tubulin family. As to quaternary structure, dimer of alpha and beta chains. A typical microtubule is a hollow water-filled tube with an outer diameter of 25 nm and an inner diameter of 15 nM. Alpha-beta heterodimers associate head-to-tail to form protofilaments running lengthwise along the microtubule wall with the beta-tubulin subunit facing the microtubule plus end conferring a structural polarity. Microtubules usually have 13 protofilaments but different protofilament numbers can be found in some organisms and specialized cells. It depends on Mg(2+) as a cofactor. As to expression, expressed in leaf sheaths.

Its subcellular location is the cytoplasm. The protein resides in the cytoskeleton. In terms of biological role, tubulin is the major constituent of microtubules, a cylinder consisting of laterally associated linear protofilaments composed of alpha- and beta-tubulin heterodimers. Microtubules grow by the addition of GTP-tubulin dimers to the microtubule end, where a stabilizing cap forms. Below the cap, tubulin dimers are in GDP-bound state, owing to GTPase activity of alpha-tubulin. The chain is Tubulin beta-1 chain (TUBB1) from Oryza sativa subsp. japonica (Rice).